The sequence spans 220 residues: Probable septum site-determining protein MinC (220 aa).

This sequence belongs to the MinC family. Interacts with MinD and FtsZ.

Its function is as follows. Cell division inhibitor that blocks the formation of polar Z ring septums. Rapidly oscillates between the poles of the cell to destabilize FtsZ filaments that have formed before they mature into polar Z rings. Prevents FtsZ polymerization. The protein is Probable septum site-determining protein MinC of Vibrio campbellii (strain ATCC BAA-1116).